A 319-amino-acid chain; its full sequence is Lipoyl synthase (319 aa).

The segment at 1–24 (MAVVIDTVGARPRHPEKQANPDTP) is disordered. A compositionally biased stretch (basic and acidic residues) spans 13–24 (RHPEKQANPDTP). The [4Fe-4S] cluster site is built by C58, C63, C69, C84, C88, C91, and S298. One can recognise a Radical SAM core domain in the interval 70–287 (WDKSHATFMI…EEIARAKGFL (218 aa)).

This sequence belongs to the radical SAM superfamily. Lipoyl synthase family. It depends on [4Fe-4S] cluster as a cofactor.

It is found in the cytoplasm. It carries out the reaction [[Fe-S] cluster scaffold protein carrying a second [4Fe-4S](2+) cluster] + N(6)-octanoyl-L-lysyl-[protein] + 2 oxidized [2Fe-2S]-[ferredoxin] + 2 S-adenosyl-L-methionine + 4 H(+) = [[Fe-S] cluster scaffold protein] + N(6)-[(R)-dihydrolipoyl]-L-lysyl-[protein] + 4 Fe(3+) + 2 hydrogen sulfide + 2 5'-deoxyadenosine + 2 L-methionine + 2 reduced [2Fe-2S]-[ferredoxin]. The protein operates within protein modification; protein lipoylation via endogenous pathway; protein N(6)-(lipoyl)lysine from octanoyl-[acyl-carrier-protein]: step 2/2. Its function is as follows. Catalyzes the radical-mediated insertion of two sulfur atoms into the C-6 and C-8 positions of the octanoyl moiety bound to the lipoyl domains of lipoate-dependent enzymes, thereby converting the octanoylated domains into lipoylated derivatives. The chain is Lipoyl synthase from Phenylobacterium zucineum (strain HLK1).